The chain runs to 243 residues: Ribonuclease 3 (243 aa).

One can recognise an RNase III domain in the interval 10 to 146; sequence VNRFRKRFDT…FIGALYLDQG (137 aa). Glu59 is a Mg(2+) binding site. Asp63 is an active-site residue. 2 residues coordinate Mg(2+): Asp132 and Glu135. Glu135 is a catalytic residue. The 70-residue stretch at 172–241 folds into the DRBM domain; the sequence is DFKTQFQEYV…AKSAYKQLKQ (70 aa). The segment covering 219 to 231 has biased composition (basic and acidic residues); it reads GKGKTKKESEQRA. Positions 219–243 are disordered; the sequence is GKGKTKKESEQRAAKSAYKQLKQIK.

The protein belongs to the ribonuclease III family. As to quaternary structure, homodimer. The cofactor is Mg(2+).

Its subcellular location is the cytoplasm. It carries out the reaction Endonucleolytic cleavage to 5'-phosphomonoester.. In terms of biological role, digests double-stranded RNA. Involved in the processing of primary rRNA transcript to yield the immediate precursors to the large and small rRNAs (23S and 16S). Processes some mRNAs, and tRNAs when they are encoded in the rRNA operon. Processes pre-crRNA and tracrRNA of type II CRISPR loci if present in the organism. The sequence is that of Ribonuclease 3 from Staphylococcus aureus (strain Mu3 / ATCC 700698).